A 367-amino-acid chain; its full sequence is rRNA processing protein RCL1 (367 aa).

At serine 2 the chain carries N-acetylserine.

It belongs to the RNA 3'-terminal cyclase family. Type 2 subfamily. In terms of assembly, interacts directly with BMS1 and the U3 snoRNA to form a stable subcomplex. Component of the 90S small subunit processome also known as 90S pre-ribosome that consists of the 35S pre-rRNA, early-associating ribosomal proteins most of which are part of the small ribosomal subunit, the U3 snoRNA and associated proteins.

It localises to the nucleus. The protein resides in the nucleolus. In terms of biological role, does not have cyclase activity. Plays a role in 40S-ribosomal-subunit biogenesis in the early pre-rRNA processing steps at sites A0, A1 and A2 that are required for proper maturation of the 18S RNA. RCL1 activates BMS1 by promoting GDP/GTP exchange. The sequence is that of rRNA processing protein RCL1 (RCL1) from Saccharomyces cerevisiae (strain ATCC 204508 / S288c) (Baker's yeast).